The following is a 341-amino-acid chain: Ribosomal RNA small subunit methyltransferase C (341 aa).

It belongs to the methyltransferase superfamily. RsmC family. Monomer.

The protein resides in the cytoplasm. The catalysed reaction is guanosine(1207) in 16S rRNA + S-adenosyl-L-methionine = N(2)-methylguanosine(1207) in 16S rRNA + S-adenosyl-L-homocysteine + H(+). Functionally, specifically methylates the guanine in position 1207 of 16S rRNA in the 30S particle. This chain is Ribosomal RNA small subunit methyltransferase C, found in Shewanella amazonensis (strain ATCC BAA-1098 / SB2B).